Consider the following 395-residue polypeptide: Multidrug resistance protein MdtL (395 aa).

Transmembrane regions (helical) follow at residues 4-24, 42-62, 69-89, 93-113, 131-151, 158-178, 217-237, 247-267, 271-291, 295-315, 333-353, and 358-378; these read FLLC…MYLV, IAFS…GKIA, PVAI…SRAS, LFLS…VVAF, LLNG…HLIM, SLFY…LFIL, VSVI…VMGF, ALTA…LGLF, TLML…SLAH, VTLF…GVAM, LGIA…ILGI, and MLIG…FSVA.

Belongs to the major facilitator superfamily. DHA1 family. MdtL (TC 2.A.1.2.22) subfamily.

It is found in the cell inner membrane. The protein is Multidrug resistance protein MdtL of Salmonella agona (strain SL483).